A 1224-amino-acid polypeptide reads, in one-letter code: Coatomer subunit alpha (1224 aa).

WD repeat units follow at residues 3 to 38 (TKFE…LWDY), 42 to 80 (TLID…VWNY), 84 to 122 (RCLF…VWNW), and 126 to 164 (TCVC…VWDI). At serine 173 the chain carries Phosphoserine. Threonine 185 carries the post-translational modification Phosphothreonine. WD repeat units lie at residues 195–234 (AVVK…IWRM), 241–278 (EVDT…VWDM), and 282–319 (TGVQ…VFKL). At serine 402 the chain carries Phosphoserine. Position 591 is a phosphothreonine (threonine 591). A Phosphoserine modification is found at serine 895. An Omega-N-methylarginine modification is found at arginine 965. Residue serine 1193 is modified to Phosphoserine.

In terms of assembly, oligomeric complex that consists of at least the alpha, beta, beta', gamma, delta, epsilon and zeta subunits. Interacts with SCYL1. Interacts with JAGN1. Interacts with TMEM41B. Interacts with SVEP1. Probably interacts with PEX11A. As to expression, uniformly expressed in a wide range of adult and fetal tissues. Xenin is found in gastric, duodenal and jejunal mucosa. Circulates in the blood. Seems to be confined to specific endocrine cells.

It is found in the cytoplasm. The protein resides in the golgi apparatus membrane. Its subcellular location is the cytoplasmic vesicle. It localises to the COPI-coated vesicle membrane. The protein localises to the secreted. In terms of biological role, the coatomer is a cytosolic protein complex that binds to dilysine motifs and reversibly associates with Golgi non-clathrin-coated vesicles, which further mediate biosynthetic protein transport from the ER, via the Golgi up to the trans Golgi network. Coatomer complex is required for budding from Golgi membranes, and is essential for the retrograde Golgi-to-ER transport of dilysine-tagged proteins. In mammals, the coatomer can only be recruited by membranes associated to ADP-ribosylation factors (ARFs), which are small GTP-binding proteins; the complex also influences the Golgi structural integrity, as well as the processing, activity, and endocytic recycling of LDL receptors. Functionally, xenin stimulates exocrine pancreatic secretion. It inhibits pentagastrin-stimulated secretion of acid, to induce exocrine pancreatic secretion and to affect small and large intestinal motility. In the gut, xenin interacts with the neurotensin receptor. The polypeptide is Coatomer subunit alpha (COPA) (Homo sapiens (Human)).